Consider the following 344-residue polypeptide: MAPSKQYSEGGQLQLMDAERIEEEEECFESIDKLISQGINSGDVKKLQDAGIYTCNGLMMHTKKSLTGIKGLSEAKVDKICEAAEKLLSQGFITGSDLLIKRKSVVRITTGSQALDKLLGGGIETLCITEAFGEFRSGKTQLAHTLCVSAQLPIHMHGGNGKVAYIDTEGTFRPERIVPIAERFGMDANAVLDNIIYARAYTYEHQYNLLLGLAAKMAEEPFRLLIVDSVIALFRVDFSGRGELAERQQKLAQMLSRLTKIAEEFNVAVYITNQVIADPGGGMFITDLKKPAGGHVLAHAATIRLMLRKGKGEQRVCKIFDAPNLPEGEAVFQVTSGGIMDAKD.

133-140 (GEFRSGKT) is a binding site for ATP. DsDNA is bound at residue Arg235. SsDNA contacts are provided by Arg235, Phe238, Arg241, Arg247, and Arg315. Residues Arg241 and Arg247 each contribute to the dsDNA site.

It belongs to the RecA family. DMC1 subfamily. Expressed in meiotic young panicles.

The protein resides in the nucleus. In terms of biological role, recombinase that may participate in meiotic recombination, specifically in homologous strand assimilation, which is required for the resolution of meiotic double-strand breaks. Exhibits DNA-dependent ATPase activity when bound to single-stranded DNA (ssDNA). Mediates renaturation of homologous complementary strands as well as assimilation of single strands into homologous supercoiled duplexes leading to D-loop formation. Binds circular single-stranded DNA (ssDNA) and circular double-stranded DNA (dsDNA) in vitro. Catalyzes DNA homologous renaturation and DNA strand exchange. The rates of these activities are dependent on the state of ATP hydrolysis. Forms helical filaments along ssDNA and dsDNA, and promotes strand exchange between ssDNA and dsDNA with long DNA substrates of several thousand base pairs. The presence of the replication protein A is not required for this activity. Seems to be required for homologous pairing and subsequent chromosome segregation during male meiosis. May be not directly required for homologous pairing during male meiosis. Required for synaptonemal complex assembly and crossover formation. Functions redundantly with DMC1B. In Oryza sativa subsp. japonica (Rice), this protein is Meiotic recombination protein DMC1 homolog A.